The chain runs to 729 residues: Heterogeneous nuclear ribonucleoprotein M (729 aa).

Residues 1–13 (MAAGVEAAAEVAA) show a composition bias toward low complexity. Positions 1–65 (MAAGVEAAAE…GGNRFEPYSN (65 aa)) are disordered. N-acetylalanine is present on Ala2. Lys17 participates in a covalent cross-link: Glycyl lysine isopeptide (Lys-Gly) (interchain with G-Cter in SUMO2). Ser29 carries the post-translational modification Phosphoserine. Residues Lys37, Lys68, and Lys82 each participate in a glycyl lysine isopeptide (Lys-Gly) (interchain with G-Cter in SUMO2) cross-link. Residues 37-49 (KGEERPTQNEKRK) are compositionally biased toward basic and acidic residues. 2 consecutive RRM domains span residues 70 to 148 (YRAF…EDPD) and 203 to 280 (STVF…MDER). The residue at position 85 (Ser85) is a Phosphoserine. Residues Lys87 and Lys126 each participate in a glycyl lysine isopeptide (Lys-Gly) (interchain with G-Cter in SUMO2) cross-link. At Lys133 the chain carries N6-acetyllysine; alternate. Residue Lys133 forms a Glycyl lysine isopeptide (Lys-Gly) (interchain with G-Cter in SUMO2); alternate linkage. Glycyl lysine isopeptide (Lys-Gly) (interchain with G-Cter in SUMO2) cross-links involve residues Lys142 and Lys144. Position 203 is a phosphoserine (Ser203). Residue Lys220 forms a Glycyl lysine isopeptide (Lys-Gly) (interchain with G-Cter in SUMO2) linkage. Lys276 bears the N6-acetyllysine; alternate mark. Residue Lys276 forms a Glycyl lysine isopeptide (Lys-Gly) (interchain with G-Cter in SUMO2); alternate linkage. Glycyl lysine isopeptide (Lys-Gly) (interchain with G-Cter in SUMO2) cross-links involve residues Lys284 and Lys344. Residues Ser364 and Ser376 each carry the phosphoserine modification. Glycyl lysine isopeptide (Lys-Gly) (interchain with G-Cter in SUMO2) cross-links involve residues Lys380 and Lys387. Phosphoserine is present on Ser396. A run of 4 repeats spans residues 399–404 (GIERMG), 406–411 (GIDRIS), 414–419 (GMERMG), and 425–430 (GMDRVG). The 27 X 6 AA repeats of [GEVSTPAN]-[ILMV]-[DE]-[RH]-[MLVI]-[GAV] stretch occupies residues 399–607 (GIERMGPGID…ALGAGIERMG (209 aa)). Ser431 is subject to Phosphoserine. A run of 3 repeats spans residues 432 to 437 (EIERMG), 439 to 444 (VMDRMG), and 445 to 450 (SVERMG). Ser451 carries the phosphoserine modification. 4 repeat units span residues 452-457 (SIERMG), 460-465 (GLDHMA), 467-472 (SIERMG), and 474-479 (TMERIG). Position 467 is a phosphoserine (Ser467). A Phosphoserine modification is found at Ser480. 16 tandem repeats follow at residues 481–486 (GVERMG), 492–497 (GLERMA), 499–504 (PIDRVG), 506–511 (TIERMG), 513–518 (GVERMG), 520–525 (AIERMG), 527–532 (SMDRMV), 539–544 (SLERMG), 546–551 (VMDRMA), 553–558 (GLERMG), 561–566 (NLERMG), 567–571 (LERMG), 574–579 (SLERMG), 580–584 (LERMG), 587–592 (SLERMG), and 602–607 (GIERMG). Omega-N-methylarginine is present on Arg495. At Ser527 the chain carries Phosphoserine. At Ser574 the chain carries Phosphoserine. Ser587 is subject to Phosphoserine. Phosphoserine is present on residues Ser617, Ser632, and Ser636. Residue Lys650 forms a Glycyl lysine isopeptide (Lys-Gly) (interchain with G-Cter in SUMO2) linkage. Positions 652-728 (CQIFVRNLPF…REIDVRIDRN (77 aa)) constitute an RRM 3 domain. A Phosphothreonine modification is found at Thr664. Lys666 is covalently cross-linked (Glycyl lysine isopeptide (Lys-Gly) (interchain with G-Cter in SUMO2)). An N6-acetyllysine modification is found at Lys671. Residues Lys684 and Lys691 each participate in a glycyl lysine isopeptide (Lys-Gly) (interchain with G-Cter in SUMO2) cross-link. N6-acetyllysine; alternate is present on Lys697. Lys697 is covalently cross-linked (Glycyl lysine isopeptide (Lys-Gly) (interchain with G-Cter in SUMO2); alternate). Lys697 is covalently cross-linked (Glycyl lysine isopeptide (Lys-Gly) (interchain with G-Cter in SUMO1); alternate). A Phosphoserine modification is found at Ser700. Residue Lys715 forms a Glycyl lysine isopeptide (Lys-Gly) (interchain with G-Cter in SUMO2) linkage.

As to quaternary structure, identified in the spliceosome C complex. Interacts with PPIA/CYPA. In terms of processing, sumoylated.

The protein localises to the nucleus. Pre-mRNA binding protein in vivo, binds avidly to poly(G) and poly(U) RNA homopolymers in vitro. Involved in splicing. Acts as a receptor for carcinoembryonic antigen in Kupffer cells, may initiate a series of signaling events leading to tyrosine phosphorylation of proteins and induction of IL-1 alpha, IL-6, IL-10 and tumor necrosis factor alpha cytokines. The sequence is that of Heterogeneous nuclear ribonucleoprotein M (Hnrnpm) from Mus musculus (Mouse).